We begin with the raw amino-acid sequence, 202 residues long: ATP-dependent Clp protease proteolytic subunit 1 (202 aa).

Ser102 functions as the Nucleophile in the catalytic mechanism. His127 is a catalytic residue.

This sequence belongs to the peptidase S14 family. As to quaternary structure, fourteen ClpP subunits assemble into 2 heptameric rings which stack back to back to give a disk-like structure with a central cavity, resembling the structure of eukaryotic proteasomes.

Its subcellular location is the cytoplasm. It carries out the reaction Hydrolysis of proteins to small peptides in the presence of ATP and magnesium. alpha-casein is the usual test substrate. In the absence of ATP, only oligopeptides shorter than five residues are hydrolyzed (such as succinyl-Leu-Tyr-|-NHMec, and Leu-Tyr-Leu-|-Tyr-Trp, in which cleavage of the -Tyr-|-Leu- and -Tyr-|-Trp bonds also occurs).. Cleaves peptides in various proteins in a process that requires ATP hydrolysis. Has a chymotrypsin-like activity. Plays a major role in the degradation of misfolded proteins. The protein is ATP-dependent Clp protease proteolytic subunit 1 of Agrobacterium fabrum (strain C58 / ATCC 33970) (Agrobacterium tumefaciens (strain C58)).